The sequence spans 186 residues: Elongation factor P (186 aa).

Belongs to the elongation factor P family.

The protein resides in the cytoplasm. Its pathway is protein biosynthesis; polypeptide chain elongation. Involved in peptide bond synthesis. Stimulates efficient translation and peptide-bond synthesis on native or reconstituted 70S ribosomes in vitro. Probably functions indirectly by altering the affinity of the ribosome for aminoacyl-tRNA, thus increasing their reactivity as acceptors for peptidyl transferase. The protein is Elongation factor P of Polynucleobacter asymbioticus (strain DSM 18221 / CIP 109841 / QLW-P1DMWA-1) (Polynucleobacter necessarius subsp. asymbioticus).